The sequence spans 319 residues: Cytochrome c biogenesis protein CcsA (319 aa).

The next 8 membrane-spanning stretches (helical) occupy residues 14–34 (AFGG…FPGI), 36–56 (GLNR…TLTL), 69–89 (SNLY…HLFI), 97–117 (LIGA…SLAL), 142–162 (IMML…LFLI), 227–247 (TIGL…VWAN), 254–274 (WSWD…AAYL), and 288–308 (AILA…VNFL).

The protein belongs to the CcmF/CycK/Ccl1/NrfE/CcsA family. May interact with Ccs1.

It localises to the plastid. Its subcellular location is the chloroplast thylakoid membrane. Its function is as follows. Required during biogenesis of c-type cytochromes (cytochrome c6 and cytochrome f) at the step of heme attachment. The polypeptide is Cytochrome c biogenesis protein CcsA (Pyropia yezoensis (Susabi-nori)).